Here is a 112-residue protein sequence, read N- to C-terminus: UPF0342 protein SPT_0901 (112 aa).

This sequence belongs to the UPF0342 family.

The sequence is that of UPF0342 protein SPT_0901 from Streptococcus pneumoniae (strain Taiwan19F-14).